Consider the following 673-residue polypeptide: Fatty acyl-CoA synthetase B (673 aa).

Residues 1–18 (MINNWLAVGLLVVSGILA) form the signal peptide. Asn-267 carries N-linked (GlcNAc...) asparagine glycosylation.

It belongs to the ATP-dependent AMP-binding enzyme family.

The protein localises to the endoplasmic reticulum. It catalyses the reaction a long-chain fatty acid + ATP + CoA = a long-chain fatty acyl-CoA + AMP + diphosphate. Long chain fatty acid acyl-CoA synthetases catalyze the formation of a thiester bond between a free fatty acid and coenzyme A during fatty acid metabolic process. The sequence is that of Fatty acyl-CoA synthetase B (fcsB) from Dictyostelium discoideum (Social amoeba).